The following is a 126-amino-acid chain: Histone H2B type 2-B (126 aa).

The segment covering 1–12 (MPDPAKSAPAPK) has biased composition (low complexity). Residues 1-36 (MPDPAKSAPAPKKGSKKAVTKVQKKDGKKRKRSRKE) form a disordered region. P2 carries the N-acetylproline modification. N6-(2-hydroxyisobutyryl)lysine; alternate is present on K6. K6 carries the N6-(beta-hydroxybutyryl)lysine; alternate modification. The residue at position 6 (K6) is an N6-acetyllysine; alternate. K6 bears the N6-butyryllysine; alternate mark. At K6 the chain carries N6-crotonyllysine; alternate. K6 is modified (N6-lactoyllysine; alternate). A Glycyl lysine isopeptide (Lys-Gly) (interchain with G-Cter in SUMO2); alternate cross-link involves residue K6. At S7 the chain carries ADP-ribosylserine. Residue K12 is modified to N6-(beta-hydroxybutyryl)lysine; alternate. K12 and K13 each carry N6-acetyllysine; alternate. 2 positions are modified to N6-crotonyllysine; alternate: K12 and K13. At K12 the chain carries N6-lactoyllysine; alternate. K13 is modified (N6-(2-hydroxyisobutyryl)lysine; alternate). Phosphoserine; by STK4/MST1 is present on S15. N6-acetyllysine; alternate occurs at positions 16, 17, 21, and 24. An N6-crotonyllysine; alternate mark is found at K16, K17, K21, and K24. N6-lactoyllysine; alternate occurs at positions 16, 17, 21, and 24. K17 is modified (N6-glutaryllysine; alternate). An N6-(2-hydroxyisobutyryl)lysine; alternate mark is found at K21 and K24. K21 carries the post-translational modification N6-(beta-hydroxybutyryl)lysine; alternate. K21 bears the N6-butyryllysine; alternate mark. A Glycyl lysine isopeptide (Lys-Gly) (interchain with G-Cter in SUMO2); alternate cross-link involves residue K21. The residue at position 25 (K25) is an N6-(2-hydroxyisobutyryl)lysine. K35 is subject to N6-(2-hydroxyisobutyryl)lysine; alternate. K35 bears the N6-(beta-hydroxybutyryl)lysine; alternate mark. N6-crotonyllysine; alternate is present on K35. N6-glutaryllysine; alternate is present on K35. K35 bears the N6-succinyllysine; alternate mark. K35 participates in a covalent cross-link: Glycyl lysine isopeptide (Lys-Gly) (interchain with G-Cter in ubiquitin); alternate. E36 is modified (polyADP-ribosyl glutamic acid). The residue at position 37 (S37) is a Phosphoserine; by AMPK. N6-(2-hydroxyisobutyryl)lysine; alternate is present on residues K44, K47, and K58. Residue K44 is modified to N6-lactoyllysine; alternate. 2 positions are modified to N6-glutaryllysine; alternate: K44 and K47. An N6-methyllysine; alternate modification is found at K47. K58 is modified (N6,N6-dimethyllysine; alternate). R80 carries the dimethylated arginine modification. K86 carries the N6-(2-hydroxyisobutyryl)lysine; alternate modification. K86 bears the N6-acetyllysine; alternate mark. At K86 the chain carries N6-lactoyllysine; alternate. K86 is modified (N6,N6,N6-trimethyllysine; alternate). Omega-N-methylarginine is present on residues R87 and R93. At K109 the chain carries N6-(2-hydroxyisobutyryl)lysine; alternate. K109 bears the N6-(beta-hydroxybutyryl)lysine; alternate mark. Position 109 is an N6-lactoyllysine; alternate (K109). K109 is subject to N6-glutaryllysine; alternate. K109 is modified (N6-methyllysine; alternate). S113 is a glycosylation site (O-linked (GlcNAc) serine). T116 bears the Phosphothreonine mark. Residues K117 and K121 each carry the N6-(2-hydroxyisobutyryl)lysine; alternate modification. K117 bears the N6-(beta-hydroxybutyryl)lysine; alternate mark. N6-lactoyllysine; alternate occurs at positions 117 and 121. Residues K117 and K121 each carry the N6-glutaryllysine; alternate modification. 2 positions are modified to N6-succinyllysine; alternate: K117 and K121. K117 is modified (N6-methylated lysine; alternate). K121 is covalently cross-linked (Glycyl lysine isopeptide (Lys-Gly) (interchain with G-Cter in ubiquitin); alternate).

It belongs to the histone H2B family. The nucleosome is a histone octamer containing two molecules each of H2A, H2B, H3 and H4 assembled in one H3-H4 heterotetramer and two H2A-H2B heterodimers. The octamer wraps approximately 147 bp of DNA. Post-translationally, monoubiquitination at Lys-35 (H2BK34Ub) by the MSL1/MSL2 dimer is required for histone H3 'Lys-4' (H3K4me) and 'Lys-79' (H3K79me) methylation and transcription activation at specific gene loci, such as HOXA9 and MEIS1 loci. Similarly, monoubiquitination at Lys-121 (H2BK120Ub) by the RNF20/40 complex gives a specific tag for epigenetic transcriptional activation and is also prerequisite for histone H3 'Lys-4' and 'Lys-79' methylation. It also functions cooperatively with the FACT dimer to stimulate elongation by RNA polymerase II. H2BK120Ub also acts as a regulator of mRNA splicing: deubiquitination by USP49 is required for efficient cotranscriptional splicing of a large set of exons. In terms of processing, phosphorylated on Ser-15 (H2BS14ph) by STK4/MST1 during apoptosis; which facilitates apoptotic chromatin condensation. Also phosphorylated on Ser-15 in response to DNA double strand breaks (DSBs), and in correlation with somatic hypermutation and immunoglobulin class-switch recombination. Phosphorylation at Ser-37 (H2BS36ph) by AMPK in response to stress promotes transcription. GlcNAcylation at Ser-113 promotes monoubiquitination of Lys-121. It fluctuates in response to extracellular glucose, and associates with transcribed genes. Post-translationally, ADP-ribosylated by PARP1 or PARP2 on Ser-7 (H2BS6ADPr) in response to DNA damage. H2BS6ADPr promotes recruitment of CHD1L. Poly ADP-ribosylation on Glu-36 (H2BE35ADPr) by PARP1 regulates adipogenesis: it inhibits phosphorylation at Ser-37 (H2BS36ph), thereby blocking expression of pro-adipogenetic genes. In terms of processing, crotonylation (Kcr) is specifically present in male germ cells and marks testis-specific genes in post-meiotic cells, including X-linked genes that escape sex chromosome inactivation in haploid cells. Crotonylation marks active promoters and enhancers and confers resistance to transcriptional repressors. It is also associated with post-meiotically activated genes on autosomes. Hydroxybutyrylation of histones is induced by starvation. Post-translationally, lactylated in macrophages by EP300/P300 by using lactoyl-CoA directly derived from endogenous or exogenous lactate, leading to stimulates gene transcription.

It localises to the nucleus. The protein resides in the chromosome. Core component of nucleosome. Nucleosomes wrap and compact DNA into chromatin, limiting DNA accessibility to the cellular machineries which require DNA as a template. Histones thereby play a central role in transcription regulation, DNA repair, DNA replication and chromosomal stability. DNA accessibility is regulated via a complex set of post-translational modifications of histones, also called histone code, and nucleosome remodeling. This is Histone H2B type 2-B from Mus musculus (Mouse).